A 232-amino-acid chain; its full sequence is MANPKVFFDLTVDGKPAGRIVIELFADLTPRTAENFRGLCTGERGIGKCGKPIHYKGSTFDHIVPDLMWCGGDIIFENEPIHSEELDDEYFILNHEDGPGIISMADSNGSQFQIHMKDYGLQVDGDHVVIGKVVEGLDLMRNIEKEVITTTTRTPSKPVVIADCGELSDYRSERCYLMKNIEKEVIIKTAKDNKPVVIADCGGLSDDRSERYYLINIVVACMVLMCFWSWFV.

The region spanning 7–166 (FFDLTVDGKP…KPVVIADCGE (160 aa)) is the PPIase cyclophilin-type domain. N-linked (GlcNAc...) asparagine glycosylation occurs at asparagine 108. A helical membrane pass occupies residues 212 to 232 (YYLINIVVACMVLMCFWSWFV).

Belongs to the cyclophilin-type PPIase family. As to expression, expressed only in flowers.

The protein resides in the membrane. It carries out the reaction [protein]-peptidylproline (omega=180) = [protein]-peptidylproline (omega=0). Its function is as follows. PPIases accelerate the folding of proteins. It catalyzes the cis-trans isomerization of proline imidic peptide bonds in oligopeptides. In Arabidopsis thaliana (Mouse-ear cress), this protein is Peptidyl-prolyl cis-trans isomerase CYP26-1 (CYP26-1).